We begin with the raw amino-acid sequence, 166 residues long: Myosin regulatory light chain 2, ventricular/cardiac muscle isoform (166 aa).

Residue Ser-2 is modified to N,N,N-trimethylserine. Asn-14 carries the deamidated asparagine modification. Ser-19 carries the phosphoserine modification. EF-hand domains lie at 24 to 59, 94 to 129, and 130 to 165; these read TQIQ…LGRV, DPEE…QAER, and FSKE…GEEK. Residues Asp-37, Asn-39, Asp-41, and Asp-48 each coordinate Ca(2+). At Thr-52 the chain carries Phosphothreonine.

Myosin is a hexamer of 2 heavy chains and 4 light chains. Interacts with MYOC. Post-translationally, N-terminus is methylated by METTL11A/NTM1. Phosphorylated by MYLK3 and MYLK2; promotes cardiac muscle contraction and function. Dephosphorylated by PPP1CB complexed to PPP1R12B. The phosphorylated form in adult is expressed as gradients across the heart from endocardium (low phosphorylation) to epicardium (high phosphorylation); regulates cardiac torsion and workload distribution.

Its subcellular location is the cytoplasm. The protein resides in the myofibril. It is found in the sarcomere. It localises to the a band. Functionally, contractile protein that plays a role in heart development and function. Following phosphorylation, plays a role in cross-bridge cycling kinetics and cardiac muscle contraction by increasing myosin lever arm stiffness and promoting myosin head diffusion; as a consequence of the increase in maximum contraction force and calcium sensitivity of contraction force. These events altogether slow down myosin kinetics and prolong duty cycle resulting in accumulated myosins being cooperatively recruited to actin binding sites to sustain thin filament activation as a means to fine-tune myofilament calcium sensitivity to force. During cardiogenesis plays an early role in cardiac contractility by promoting cardiac myofibril assembly. This chain is Myosin regulatory light chain 2, ventricular/cardiac muscle isoform, found in Bos taurus (Bovine).